Consider the following 465-residue polypeptide: MRVLIIGGSIAGLTLAHCLEKAKIDYVLLEKKEEIAPQEGASIGILPNGGRIMEQLGLYHQIEQLIEPLARAHVTYPDGFHFTSQYPALLQQRFGYPLAFLDRQKLLQILAAGPVQSGRVKLGHQVVNIESTPDGVTVRTSHGHVYQGDLVVGADGVHSRVRAEMWRLATASQGEIFRSEYNKLTIDYACIFGISSPVDQLEPGEQITCYNDGWSILSVIGQNGRVFWFLFIKLDKESVYDGSRKNGPRFSPADARAHCERLAHEPVWNGVKFGHVWAQCEVFQMTPLEEGLFSKWYWRNIVCIGDSMHKFAPHIGQGANCAIEDAAQLSNRLQAWLYGCGPNDPPTASDLSEILAGFVEDRLRRLGPVAVAARSAMRLHARQGVKNWILGRYLLPYAGDKPADWASQGIAGGGVTLDFVEPPERSGPGWVQFSQPRKRPTFPLTVAGLCLVAIVIRMLHSTLTV.

The N-terminal stretch at 1–16 is a signal peptide; that stretch reads MRVLIIGGSIAGLTLA. Glu30, Gly44, and Arg103 together coordinate FAD. Residue Tyr210 is part of the active site. The FAD site is built by Asp306 and Ala319. Residues 440-456 traverse the membrane as a helical segment; it reads PTFPLTVAGLCLVAIVI.

The protein belongs to the paxM FAD-dependent monooxygenase family. FAD serves as cofactor.

Its subcellular location is the membrane. The catalysed reaction is 4-hydroxy-3-[(2E,6E)-farnesyl]-6-(pyridin-3-yl)-2H-pyran-2-one + NADPH + O2 + H(+) = 2-oxo-3-[(8S)-epoxy-(2E,6E)-farnesyl]-6-(pyridin-3-yl)-2H-pyran-4-olate + NADP(+) + H2O. The protein operates within secondary metabolite biosynthesis; terpenoid biosynthesis. Functionally, FAD-dependent monooxygenase; part of the gene cluster that mediates the biosynthesis of pyripyropene A, a specific human acyl-coenzyme A:cholesterol acyltransferase 2 inhibitor. The first step of the pathway is the synthesis of nicotinyl-CoA from nicotinic acid by the nicotinic acid-CoA ligase pyr1. Nicotinyl-CoA is then a substrate of polyketide synthase pyr2 to produce 4-hydroxy-6-(3-pyridinyl)-2H-pyran-2-one (HPPO) which is further prenylated by the polyprenyl transferase pyr6 to yield farnesyl-HPPO. The next steps consist of an epoxidation of farnesyl-HPPO to epoxyfarnesyl-HPPO by FAD-dependent monooxygenase pyr5 and a cyclization of the terpenoid portion by the terpene cyclase pyr4 to yield deacetyl-pyripyropene E. The 2 cytochrome P450 monooxygenases pyr3 and pyr9, and the 2 acetyltransferases pyr7 and pyr8 are involved in the conversion of deacetyl-pyripyropene E into pyripyropene A through several cycles of oxidation and acetylation steps. Pyr7 acetylates deacetyl-pyripyropene E to pyripyropene E which is oxidized to 11-deacetyl-pyripyropene O by pyr3, which is in turn acetylated into pyripyropene O by pyr8. Pyripyropene O is then oxidized to deacetyl-pyripyropene A by pyr9. Deacetyl-pyripyropene A is finally acetylated to pyripyropene A by pyr8. The protein is FAD-dependent monooxygenase pyr5 of Aspergillus fumigatus (strain ATCC MYA-4609 / CBS 101355 / FGSC A1100 / Af293) (Neosartorya fumigata).